The primary structure comprises 534 residues: Signal recognition particle subunit SRP54 (534 aa).

Positions 1–296 (MVLQDLGRRI…EPKAFIQKLL (296 aa)) are G-domain. GTP contacts are provided by residues 109-116 (GLQGAGKT), 191-195 (DTSGR), and 249-252 (TKTD). The segment at 297-534 (GMGDMAGLVE…GGGGGRGRGR (238 aa)) is M-domain.

This sequence belongs to the GTP-binding SRP family. SRP54 subfamily. As to quaternary structure, fungal signal recognition particle consists of a 7S RNA molecule (scR1) and at least six protein subunits: srp72, srp68, srpA/srp54, sec65, srp21 and srp14.

It is found in the cytoplasm. It localises to the endoplasmic reticulum. It carries out the reaction GTP + H2O = GDP + phosphate + H(+). Functionally, signal-recognition-particle (SRP) assembly has a crucial role in targeting secretory proteins to the rough endoplasmic reticulum (ER) membrane. SRP is required for the cotranslational protein translocation for ER import and preferentially recognizes strongly hydrophobic signal sequences. It is involved in targeting the nascent chain-ribosome (RNC) complex to the ER and is proposed to participate in the arrest of nascent chain elongation during membrane targeting. srpA/srp54 binds to the signal sequence of presecretory protein when they emerge from the ribosomes. srpA/srp54 interacts with the scR1 RNA and mediates the association of the resulting SRP-RNC complex with the signal recognition particle receptor (SR) via its alpha subunit srp101. Both, srpA/srp54 and srp101, are locked in their GTP bound forms in the SRP-RNC-SR complex, which dissociates upon transferring the signal sequence to the protein-conducting channel (translocon). After signal sequence transfer, srpA/srp54 and srp101 act as reciprocal GTPase-activating proteins (GAPs), thereby resolving their association. The sequence is that of Signal recognition particle subunit SRP54 (srpA) from Aspergillus niger.